The sequence spans 269 residues: Phosphatidylglycerol--prolipoprotein diacylglyceryl transferase (269 aa).

Helical transmembrane passes span 14-34 (IVQI…AGII), 49-69 (VAPE…IPMA), 89-109 (VFAI…GLLA), and 118-138 (GYSL…GQAI). Position 140 (Arg140) interacts with a 1,2-diacyl-sn-glycero-3-phospho-(1'-sn-glycerol). 3 helical membrane passes run 180 to 200 (TFLY…FVFF), 208 to 228 (GSIA…IEGL), and 240 to 260 (TAQL…WWLN).

This sequence belongs to the Lgt family.

The protein localises to the cell inner membrane. The catalysed reaction is L-cysteinyl-[prolipoprotein] + a 1,2-diacyl-sn-glycero-3-phospho-(1'-sn-glycerol) = an S-1,2-diacyl-sn-glyceryl-L-cysteinyl-[prolipoprotein] + sn-glycerol 1-phosphate + H(+). It participates in protein modification; lipoprotein biosynthesis (diacylglyceryl transfer). Functionally, catalyzes the transfer of the diacylglyceryl group from phosphatidylglycerol to the sulfhydryl group of the N-terminal cysteine of a prolipoprotein, the first step in the formation of mature lipoproteins. The sequence is that of Phosphatidylglycerol--prolipoprotein diacylglyceryl transferase from Gloeobacter violaceus (strain ATCC 29082 / PCC 7421).